The chain runs to 1477 residues: FHA domain-containing protein PS1 (1477 aa).

In terms of domain architecture, FHA spans 64-115; sequence LVVGRHPDCDILLTHPSISRFHLEIRSISSRQKLFVTDLSSVHGTWVRDLRI. Disordered regions lie at residues 188–218, 588–644, 789–818, 832–911, 942–979, 1004–1030, and 1159–1225; these read ENTTSGDEGVLHLDVTSEGTGSSVPSEDEDT, LGKA…PKSF, PNSFSKAEPTLETEDSRQQARGLVGSDSEF, LNQK…LIGS, ALAAKTSEDTKLIEELSSSDSGSQENQTPETHAVRDDV, IRTNKSQGKQKQTGRQPKDKLHRKQAL, and VEQE…IRSS. Positions 589–607 are enriched in basic and acidic residues; it reads GKADIRSHEENGESEDSRQ. Residues 832–849 are compositionally biased toward polar residues; that stretch reads LNQKRNGETKVSSRQASP. Over residues 870-883 the composition is skewed to low complexity; sequence QSLCSSSQPPSESE. 4 stretches are compositionally biased toward polar residues: residues 885–897, 957–971, 1007–1018, and 1198–1212; these read NPATDQDQESGII, LSSSDSGSQENQTPE, NKSQGKQKQTGR, and SSFQSQSYTEASSTA. Low complexity predominate over residues 1213–1225; the sequence is SARNNISRGIRSS.

In terms of biological role, required for normal spindle orientation at male meiosis II and normal formation of tetrad of microspores. Not involved in female meiosis. This chain is FHA domain-containing protein PS1, found in Arabidopsis thaliana (Mouse-ear cress).